Reading from the N-terminus, the 271-residue chain is Glutamate racemase (271 aa).

Residues 10–11 (DS) and 42–43 (YG) contribute to the substrate site. C73 functions as the Proton donor/acceptor in the catalytic mechanism. 74–75 (NT) provides a ligand contact to substrate. C183 acts as the Proton donor/acceptor in catalysis. 184–185 (TH) contributes to the substrate binding site.

Belongs to the aspartate/glutamate racemases family.

The catalysed reaction is L-glutamate = D-glutamate. It participates in cell wall biogenesis; peptidoglycan biosynthesis. Its function is as follows. Provides the (R)-glutamate required for cell wall biosynthesis. In Streptococcus thermophilus (strain ATCC BAA-250 / LMG 18311), this protein is Glutamate racemase.